A 346-amino-acid polypeptide reads, in one-letter code: UDP-3-O-acylglucosamine N-acyltransferase (346 aa).

Catalysis depends on His-253, which acts as the Proton acceptor.

The protein belongs to the transferase hexapeptide repeat family. LpxD subfamily. As to quaternary structure, homotrimer.

The catalysed reaction is a UDP-3-O-[(3R)-3-hydroxyacyl]-alpha-D-glucosamine + a (3R)-hydroxyacyl-[ACP] = a UDP-2-N,3-O-bis[(3R)-3-hydroxyacyl]-alpha-D-glucosamine + holo-[ACP] + H(+). It participates in bacterial outer membrane biogenesis; LPS lipid A biosynthesis. Functionally, catalyzes the N-acylation of UDP-3-O-acylglucosamine using 3-hydroxyacyl-ACP as the acyl donor. Is involved in the biosynthesis of lipid A, a phosphorylated glycolipid that anchors the lipopolysaccharide to the outer membrane of the cell. This is UDP-3-O-acylglucosamine N-acyltransferase from Rickettsia conorii (strain ATCC VR-613 / Malish 7).